The chain runs to 154 residues: Myoglobin (154 aa).

A Globin domain is found at 2 to 148 (GLSDGEWQLV…FRNDMAAKYK (147 aa)). Ser4 is subject to Phosphoserine. Nitrite is bound at residue His65. His65 is a binding site for O2. Thr68 is subject to Phosphothreonine. Residue His94 coordinates heme b.

Belongs to the globin family. In terms of assembly, monomeric.

It localises to the cytoplasm. Its subcellular location is the sarcoplasm. The catalysed reaction is Fe(III)-heme b-[protein] + nitric oxide + H2O = Fe(II)-heme b-[protein] + nitrite + 2 H(+). The enzyme catalyses H2O2 + AH2 = A + 2 H2O. Its function is as follows. Monomeric heme protein which primary function is to store oxygen and facilitate its diffusion within muscle tissues. Reversibly binds oxygen through a pentacoordinated heme iron and enables its timely and efficient release as needed during periods of heightened demand. Depending on the oxidative conditions of tissues and cells, and in addition to its ability to bind oxygen, it also has a nitrite reductase activity whereby it regulates the production of bioactive nitric oxide. Under stress conditions, like hypoxia and anoxia, it also protects cells against reactive oxygen species thanks to its pseudoperoxidase activity. The chain is Myoglobin (MB) from Ochotona curzoniae (Black-lipped pika).